The primary structure comprises 230 residues: tRNA pseudouridine synthase B (230 aa).

The active-site Nucleophile is aspartate 45.

It belongs to the pseudouridine synthase TruB family. Type 1 subfamily.

The enzyme catalyses uridine(55) in tRNA = pseudouridine(55) in tRNA. In terms of biological role, responsible for synthesis of pseudouridine from uracil-55 in the psi GC loop of transfer RNAs. This is tRNA pseudouridine synthase B from Endomicrobium trichonymphae.